A 302-amino-acid polypeptide reads, in one-letter code: Ribonuclease HII (302 aa).

An RNase H type-2 domain is found at Glu-53 to Ala-297. 3 residues coordinate a divalent metal cation: Asp-59, Glu-60, and Asp-163.

It belongs to the RNase HII family. Mn(2+) serves as cofactor. It depends on Mg(2+) as a cofactor.

It localises to the cytoplasm. The enzyme catalyses Endonucleolytic cleavage to 5'-phosphomonoester.. Its function is as follows. Endonuclease that specifically degrades the RNA of RNA-DNA hybrids. In Psychrobacter sp. (strain PRwf-1), this protein is Ribonuclease HII.